Reading from the N-terminus, the 310-residue chain is Conjugation stage-specific protein (310 aa).

This sequence belongs to the archaeal Rpo3/eukaryotic RPB3 RNA polymerase subunit family.

It localises to the nucleus. In terms of biological role, may be a stage-specific RNA polymerase subunit. This is Conjugation stage-specific protein (CNJC) from Tetrahymena thermophila.